A 474-amino-acid chain; its full sequence is TOM1-like protein 1 (474 aa).

Positions 22–154 (ATFAGVLTED…DLLKKGVQFP (133 aa)) constitute a VHS domain. The disordered stretch occupies residues 153-180 (FPPSDGEPETRQEAGQISPNRPTSVPTA). A compositionally biased stretch (polar residues) spans 165–178 (EAGQISPNRPTSVP). Residue Ser170 is modified to Phosphoserine. In terms of domain architecture, GAT spans 199-287 (EQIGKLHSEL…AVLGYERFTR (89 aa)). The tract at residues 291-317 (RLLEQKRNRTEATRTSSEPSAPSCDLL) is disordered. A compositionally biased stretch (basic and acidic residues) spans 293-302 (LEQKRNRTEA). Phosphoserine occurs at positions 313 and 320. Residues 392-395 (YDNF) form an interaction with GRB2 region. Positions 420–424 (LPPLP) match the SH3-binding motif. An interaction with PIK3R1 region spans residues 441–444 (YEVM). At Tyr457 the chain carries Phosphotyrosine. Positions 457-460 (YEEI) match the SH2-binding motif.

The protein belongs to the TOM1 family. As to quaternary structure, interacts with LYN. Interacts with the SH2 and SH3 domains of FYN when phosphorylated. Also interacts with GRB2 and PIK3R1 when phosphorylated. Post-translationally, phosphorylated on tyrosines by LYN. Phosphorylated on tyrosines by FYN. As to expression, strongly expressed in brain and kidney, expressed at intermediate levels skin and heart, and weakly expressed in thymus. Not expressed in liver and spleen.

The protein localises to the golgi apparatus. The protein resides in the golgi stack. It localises to the endosome membrane. Its subcellular location is the cytoplasm. It is found in the membrane. Functionally, probable adapter protein involved in signaling pathways. Interacts with the SH2 and SH3 domains of various signaling proteins when it is phosphorylated. May promote FYN activation, possibly by disrupting intramolecular SH3-dependent interactions. This chain is TOM1-like protein 1 (Tom1l1), found in Mus musculus (Mouse).